A 453-amino-acid polypeptide reads, in one-letter code: Phosphatidylserine decarboxylase proenzyme 1, mitochondrial (453 aa).

Residues 1 to 29 (MKPRFPQNVYFLARYSYLRRFQHSQRRTF) constitute a mitochondrion transit peptide. At 30 to 74 (SSFLNNIRSNYSGARASPLGGSSGAGAGAGGGGTGDSKGNAFLVP) the chain is on the mitochondrial matrix side. The helical transmembrane segment at 75–93 (GATMATILMLGALHARRLY) threads the bilayer. Topologically, residues 94–453 (EDKKIEEKRE…GQALGRWKEE (360 aa)) are mitochondrial intermembrane. Residues aspartate 199, histidine 296, and serine 408 each act as charge relay system; for autoendoproteolytic cleavage activity in the active site. Serine 408 acts as the Schiff-base intermediate with substrate; via pyruvic acid; for decarboxylase activity in catalysis. A Pyruvic acid (Ser); by autocatalysis modification is found at serine 408.

The protein belongs to the phosphatidylserine decarboxylase family. PSD-B subfamily. Eukaryotic type I sub-subfamily. Heterodimer of a large membrane-associated beta subunit and a small pyruvoyl-containing alpha subunit. It depends on pyruvate as a cofactor. Is synthesized initially as an inactive proenzyme. Formation of the active enzyme involves a self-maturation process in which the active site pyruvoyl group is generated from an internal serine residue via an autocatalytic post-translational modification. Two non-identical subunits are generated from the proenzyme in this reaction, and the pyruvate is formed at the N-terminus of the alpha chain, which is derived from the carboxyl end of the proenzyme. The autoendoproteolytic cleavage occurs by a canonical serine protease mechanism, in which the side chain hydroxyl group of the serine supplies its oxygen atom to form the C-terminus of the beta chain, while the remainder of the serine residue undergoes an oxidative deamination to produce ammonia and the pyruvoyl prosthetic group on the alpha chain. During this reaction, the Ser that is part of the protease active site of the proenzyme becomes the pyruvoyl prosthetic group, which constitutes an essential element of the active site of the mature decarboxylase. As to expression, expressed in roots, leaves, stems and flowers.

The protein localises to the mitochondrion. It localises to the mitochondrion inner membrane. The enzyme catalyses a 1,2-diacyl-sn-glycero-3-phospho-L-serine + H(+) = a 1,2-diacyl-sn-glycero-3-phosphoethanolamine + CO2. Its pathway is phospholipid metabolism; phosphatidylethanolamine biosynthesis; phosphatidylethanolamine from CDP-diacylglycerol: step 2/2. In terms of biological role, catalyzes the formation of phosphatidylethanolamine (PtdEtn) from phosphatidylserine (PtdSer). Plays a central role in phospholipid metabolism and in the interorganelle trafficking of phosphatidylserine. Contributes only to a minor proportion of PtdEtn production. This Arabidopsis thaliana (Mouse-ear cress) protein is Phosphatidylserine decarboxylase proenzyme 1, mitochondrial (PSD1).